We begin with the raw amino-acid sequence, 754 residues long: Disintegrin and metalloproteinase domain-containing protein 7 (754 aa).

The signal sequence occupies residues 1–18 (MLPGCIFLMILLIPQVKE). Positions 19-176 (KFILGVEGQQ…NYSCTELNFT (158 aa)) are excised as a propeptide. Topologically, residues 19 to 668 (KFILGVEGQQ…ACEETLHVTN (650 aa)) are extracellular. N-linked (GlcNAc...) asparagine glycans are attached at residues Asn84, Asn167, Asn174, and Asn184. Residues 199–394 (KYVELFIVAD…YKPTCMLNIP (196 aa)) enclose the Peptidase M12B domain. 4 cysteine pairs are disulfide-bonded: Cys310/Cys389, Cys350/Cys373, Cys352/Cys357, and Cys460/Cys480. The region spanning 402–488 (FQFCGNKKLD…ACPKDQFRVN (87 aa)) is the Disintegrin domain. N-linked (GlcNAc...) asparagine glycans are attached at residues Asn584 and Asn668. Residues 669–689 (ITILVVVLVLVIVGIGVLILL) traverse the membrane as a helical segment. Topologically, residues 690-754 (VRYRKCIKLK…GIADPNQSAK (65 aa)) are cytoplasmic.

In terms of assembly, interacts with ITM2B in sperm; the interaction increases following capacitation. Interacts with HSPA5 and CANX.

It is found in the membrane. Its function is as follows. Required for normal male fertility via maintenance of epithelial cell morphology in the caput epididymis and subsequently correct epididymis lumen structure required for sperm development. Plays a role in sperm motility, flagella morphology and tyrosine phosphorylation during sperm capacitance. Plays a role in normal expression levels of HSPA5, ITM2B and ADAM2 in sperm both prior to and post-capacitation. This is a non catalytic metalloprotease-like protein. This Homo sapiens (Human) protein is Disintegrin and metalloproteinase domain-containing protein 7.